Here is a 146-residue protein sequence, read N- to C-terminus: MNPAHLLVLAAVCVSLLGASSVPPRPLNLINFQRMIQCTTRRSAWDFTNYGCYCGAGGSGTPVDELDRCCKVHDDCYGAAEKYHRCSPKLTLYTSTCSSQTGSVTCKDNGTKCKAFVCNCDRTAALCFGRAPYNKNNENINPNRCR.

Residues 1 to 21 (MNPAHLLVLAAVCVSLLGASS) form the signal peptide. Positions 22-27 (VPPRPL) are excised as a propeptide. 7 disulfides stabilise this stretch: cysteine 38–cysteine 97, cysteine 52–cysteine 145, cysteine 54–cysteine 70, cysteine 69–cysteine 127, cysteine 76–cysteine 120, cysteine 86–cysteine 113, and cysteine 106–cysteine 118. Residues tyrosine 53, glycine 55, and glycine 57 each contribute to the Ca(2+) site. Residue histidine 73 is part of the active site. Aspartate 74 provides a ligand contact to Ca(2+). A glycan (N-linked (GlcNAc...) asparagine) is linked at asparagine 109. Residue aspartate 121 is part of the active site.

Belongs to the phospholipase A2 family. Group I subfamily. D49 sub-subfamily. Requires Ca(2+) as cofactor. In terms of tissue distribution, expressed by the venom gland.

It localises to the secreted. The catalysed reaction is a 1,2-diacyl-sn-glycero-3-phosphocholine + H2O = a 1-acyl-sn-glycero-3-phosphocholine + a fatty acid + H(+). Functionally, PLA2 catalyzes the calcium-dependent hydrolysis of the 2-acyl groups in 3-sn-phosphoglycerides. The polypeptide is Basic phospholipase A2 (Micrurus corallinus (Brazilian coral snake)).